The following is a 547-amino-acid chain: CAP-Gly domain-containing linker protein 3 (547 aa).

Residues 1–49 form a disordered region; the sequence is MTKTDPAPMAPPPRGEEEEEEEEDEPVPEAPSPTQERRQKPVVHPSAPA. A compositionally biased stretch (acidic residues) spans 16 to 27; sequence EEEEEEEEDEPV. 3 ANK repeats span residues 117–158, 160–191, and 197–229; these read TDMT…LRSR, TNMN…VVNS, and NHGS…LRNR. A CAP-Gly 1 domain is found at 314–356; it reads GTTEFASGQWVGVELDEPEGKNDGSVGGVRYFICPPKQGLFAS. The segment at 365–413 is disordered; that stretch reads DAPPSSVTSTPRTPRMDFSRVTGKGRREHKGKKKSPSSPSLGSLQQREG. Residues 367 to 377 show a composition bias toward low complexity; it reads PPSSVTSTPRT. Residue Thr-374 is modified to Phosphothreonine. A compositionally biased stretch (basic residues) spans 387 to 399; that stretch reads GKGRREHKGKKKS. Residues Ser-399 and Ser-401 each carry the phosphoserine modification. The CAP-Gly 2 domain maps to 436-478; it reads GKTDFAPGYWYGIELDQPTGKHDGSVFGVRYFTCAPRHGVFAP. The goLD stretch occupies residues 488–547; that stretch reads STDPPGDSVGAKKVHQVTMTQPKRTFTTVRTPKDIASENSISRLLFCCWFPWMLRAEMQS. 2 S-palmitoyl cysteine lipidation sites follow: Cys-534 and Cys-535.

Homodimer. Interacts with AKT1 and AKT2; when AKT1 and AKT2 are phosphorylated and activated, affinity is higher for AKT2. Interacts with ZDHHC13 (via ANK repeats). Interacts with ZDHHC17 (via ANK repeats). Palmitoylation by ZDHHC17 regulates association with the plasma membrane.

The protein resides in the cell membrane. It is found in the cytoplasm. It localises to the golgi apparatus. Its subcellular location is the golgi stack. Functions as a cytoplasmic linker protein. Involved in TGN-endosome dynamics. May modulate the cellular compartmentalization of AKT kinase family and promote its cell membrane localization, thereby playing a role in glucose transport in adipocytes. This Mus musculus (Mouse) protein is CAP-Gly domain-containing linker protein 3 (Clip3).